Consider the following 201-residue polypeptide: Probable nicotinate-nucleotide adenylyltransferase (201 aa).

The protein belongs to the NadD family.

The catalysed reaction is nicotinate beta-D-ribonucleotide + ATP + H(+) = deamido-NAD(+) + diphosphate. Its pathway is cofactor biosynthesis; NAD(+) biosynthesis; deamido-NAD(+) from nicotinate D-ribonucleotide: step 1/1. Catalyzes the reversible adenylation of nicotinate mononucleotide (NaMN) to nicotinic acid adenine dinucleotide (NaAD). This is Probable nicotinate-nucleotide adenylyltransferase from Clostridium botulinum (strain ATCC 19397 / Type A).